Consider the following 232-residue polypeptide: Orotidine 5'-phosphate decarboxylase (232 aa).

Residues Asp-13, Lys-35, Asp-62–Thr-71, Thr-122, Arg-182, Gln-191, Gly-211, and Arg-212 each bind substrate. The Proton donor role is filled by Lys-64.

The protein belongs to the OMP decarboxylase family. Type 1 subfamily. Homodimer.

It carries out the reaction orotidine 5'-phosphate + H(+) = UMP + CO2. It functions in the pathway pyrimidine metabolism; UMP biosynthesis via de novo pathway; UMP from orotate: step 2/2. Its function is as follows. Catalyzes the decarboxylation of orotidine 5'-monophosphate (OMP) to uridine 5'-monophosphate (UMP). This is Orotidine 5'-phosphate decarboxylase from Pseudomonas fluorescens (strain SBW25).